A 258-amino-acid chain; its full sequence is Ubiquinone/menaquinone biosynthesis C-methyltransferase UbiE (258 aa).

The disordered stretch occupies residues 1 to 21; the sequence is MSESRTSADGGMETSYGFREV. S-adenosyl-L-methionine is bound by residues Thr81, Asp102, and 130–131; that span reads NA.

It belongs to the class I-like SAM-binding methyltransferase superfamily. MenG/UbiE family.

The enzyme catalyses a 2-demethylmenaquinol + S-adenosyl-L-methionine = a menaquinol + S-adenosyl-L-homocysteine + H(+). It carries out the reaction a 2-methoxy-6-(all-trans-polyprenyl)benzene-1,4-diol + S-adenosyl-L-methionine = a 5-methoxy-2-methyl-3-(all-trans-polyprenyl)benzene-1,4-diol + S-adenosyl-L-homocysteine + H(+). It participates in quinol/quinone metabolism; menaquinone biosynthesis; menaquinol from 1,4-dihydroxy-2-naphthoate: step 2/2. Its pathway is cofactor biosynthesis; ubiquinone biosynthesis. Methyltransferase required for the conversion of demethylmenaquinol (DMKH2) to menaquinol (MKH2) and the conversion of 2-polyprenyl-6-methoxy-1,4-benzoquinol (DDMQH2) to 2-polyprenyl-3-methyl-6-methoxy-1,4-benzoquinol (DMQH2). In Rhizobium johnstonii (strain DSM 114642 / LMG 32736 / 3841) (Rhizobium leguminosarum bv. viciae), this protein is Ubiquinone/menaquinone biosynthesis C-methyltransferase UbiE.